Reading from the N-terminus, the 346-residue chain is MSADTETLARKVREEVIKPEQSTLISPDRQSPSLLRREATVEPRFELFHFVFSVCSQKVRGTLMEKGVTFGSNELTILPPQNENYCPQYVRLRLRSEAAAKHRPVSSFTGQSSVDSEGFDPLVVPTLVDHETGRILADSKAICLYLCDALSGGTDLLPADIREAVLKQVQLADTTPHVALLYGADPDGDRRPESMQAVMPGIHAHKIDAVRRNIPLADGDPLLLEAYQHKIVKEEAAASFVINEPQMRTAISKAEQLVTDLDRDLGASTGPWLFGDRFTLADLFWAVSLYRFLWLGYSGFWKDGAGKPRVEAYANRLFARPSVKDAIIQWPGHPPSENVIHLLSNA.

A GST N-terminal domain is found at 43–154 (PRFELFHFVF…YLCDALSGGT (112 aa)). One can recognise a GST C-terminal domain in the interval 189–335 (DRRPESMQAV…AIIQWPGHPP (147 aa)).

Belongs to the GST superfamily.

The enzyme catalyses 2,5-dichlorohydroquinone + 2 glutathione = chlorohydroquinone + glutathione disulfide + chloride + H(+). It catalyses the reaction chlorohydroquinone + 2 glutathione = hydroquinone + glutathione disulfide + chloride + H(+). It participates in xenobiotic degradation; gamma-hexachlorocyclohexane degradation. Its function is as follows. Catalyzes the degradation of 2,5-dichlorohydroquinone (2,5-DCHQ) into hydroquinone (HQ) via chlorohydroquinone (CHQ). Is involved in the degradation pathway that allows S.japonicum UT26 to grow on gamma-hexachlorocyclohexane (gamma-HCH or lindane) as the sole source of carbon and energy. However, the conversion of CHQ to HQ by LinD seems not to be essential for this degradation pathway, because the conversion rate of CHQ to HQ is much lower than that of 2,5-DCHQ to CHQ. CHQ is more efficiently degraded by LinE in strain UT26. This Sphingobium indicum (strain DSM 16413 / CCM 7287 / MTCC 6362 / UT26 / NBRC 101211 / UT26S) (Sphingobium japonicum) protein is 2,5-dichlorohydroquinone reductive dechlorinase.